Reading from the N-terminus, the 702-residue chain is Ribosomal RNA large subunit methyltransferase K/L (702 aa).

The THUMP domain occupies 43–154 (LIYQSLMWSR…KETASIALDL (112 aa)).

This sequence belongs to the methyltransferase superfamily. RlmKL family.

It is found in the cytoplasm. It catalyses the reaction guanosine(2445) in 23S rRNA + S-adenosyl-L-methionine = N(2)-methylguanosine(2445) in 23S rRNA + S-adenosyl-L-homocysteine + H(+). It carries out the reaction guanosine(2069) in 23S rRNA + S-adenosyl-L-methionine = N(2)-methylguanosine(2069) in 23S rRNA + S-adenosyl-L-homocysteine + H(+). Its function is as follows. Specifically methylates the guanine in position 2445 (m2G2445) and the guanine in position 2069 (m7G2069) of 23S rRNA. This is Ribosomal RNA large subunit methyltransferase K/L from Salmonella gallinarum (strain 287/91 / NCTC 13346).